The primary structure comprises 100 residues: Large ribosomal subunit protein uL23 (100 aa).

The protein belongs to the universal ribosomal protein uL23 family. In terms of assembly, part of the 50S ribosomal subunit. Contacts protein L29, and trigger factor when it is bound to the ribosome.

In terms of biological role, one of the early assembly proteins it binds 23S rRNA. One of the proteins that surrounds the polypeptide exit tunnel on the outside of the ribosome. Forms the main docking site for trigger factor binding to the ribosome. The chain is Large ribosomal subunit protein uL23 from Shewanella oneidensis (strain ATCC 700550 / JCM 31522 / CIP 106686 / LMG 19005 / NCIMB 14063 / MR-1).